A 502-amino-acid polypeptide reads, in one-letter code: Glucose-6-phosphate isomerase (502 aa).

Residue Glu331 is the Proton donor of the active site. Catalysis depends on residues His362 and Lys471.

It belongs to the GPI family.

Its subcellular location is the cytoplasm. The enzyme catalyses alpha-D-glucose 6-phosphate = beta-D-fructose 6-phosphate. It participates in carbohydrate biosynthesis; gluconeogenesis. Its pathway is carbohydrate degradation; glycolysis; D-glyceraldehyde 3-phosphate and glycerone phosphate from D-glucose: step 2/4. Its function is as follows. Catalyzes the reversible isomerization of glucose-6-phosphate to fructose-6-phosphate. The chain is Glucose-6-phosphate isomerase from Xylella fastidiosa (strain M12).